Consider the following 219-residue polypeptide: MMKCLFLLCLCLVPIVVFSSTFTSQNLIDLPSESPLPKPVLDTNGKELNPNSSYRIISIGRGALGGDVYLGKSPNSDAPCPDGVFRYNSDVGPSGTPVRFIPLSGGIFEDQLLNIQFNIPTVRLCVSYTIWKVGINAYLRTMLLETGGTIGQADSSYFKIVKSSILGYNLLYCPITRPILCPFCRDDDFCAKVGVVIQKGKRRLALVNENPLDVNFKEV.

The signal sequence occupies residues 1-23 (MMKCLFLLCLCLVPIVVFSSTFT). Residues 24–32 (SQNLIDLPS) constitute a propeptide that is removed on maturation. Positions 26–31 (NLIDLP) match the Vacuolar targeting signal motif. A glycan (N-linked (GlcNAc...) asparagine) is linked at N51. Intrachain disulfides connect C80–C125 and C173–C184.

It belongs to the protease inhibitor I3 (leguminous Kunitz-type inhibitor) family. As to expression, in tubers and green buds of untreated plants. After abscisic acid treatment or mechanical wounding is mostly accumulated in leaves, to a lesser extent in stems, but not in roots.

In terms of biological role, inhibitor of cathepsin D (aspartic protease) and trypsin (serine protease). Protects the plant by inhibiting proteases of invading organisms. The protein is Aspartic protease inhibitor 10 (CDI) of Solanum tuberosum (Potato).